Here is a 2095-residue protein sequence, read N- to C-terminus: Oxygen-regulated protein 1 (2095 aa).

2 Doublecortin domains span residues 35-117 and 157-236; these read KRIS…VDLD and RRLV…GNYD. 5 disordered regions span residues 358–379, 643–688, 863–887, 1400–1430, and 1572–1595; these read GLSNNDEKNKKSSYPGKTDYGP, ENRK…GKIP, GAEVSEQHVTTRADPLASLKKPDFP, NKKKSISSDKEESRTSEEPRSITNSMTSSER, and SGYPCKASSNSHNDDSGQEKEPTR. Residues 1405-1419 are compositionally biased toward basic and acidic residues; the sequence is ISSDKEESRTSEEPR. Residues 1420–1430 show a composition bias toward polar residues; it reads SITNSMTSSER. Positions 1583–1595 are enriched in basic and acidic residues; it reads HNDDSGQEKEPTR.

As to quaternary structure, interacts (via the doublecortin domains) with microtubules. Interacts with RP1L1. Interacts with MAK. As to expression, expressed in the cell bodies and inner segments of photoreceptors. Not found in liver, spleen, kidney, brain, thymus, muscle, heart, lung and testis.

It is found in the cytoplasm. The protein localises to the cytoskeleton. The protein resides in the cilium axoneme. It localises to the cell projection. Its subcellular location is the cilium. It is found in the photoreceptor outer segment. Microtubule-associated protein regulating the stability and length of the microtubule-based axoneme of photoreceptors. Required for the differentiation of photoreceptor cells, it plays a role in the organization of the outer segment of rod and cone photoreceptors ensuring the correct orientation and higher-order stacking of outer segment disks along the photoreceptor axoneme. The protein is Oxygen-regulated protein 1 (Rp1) of Mus musculus (Mouse).